The following is an 876-amino-acid chain: DNA mismatch repair protein MutS (876 aa).

ATP is bound at residue 626 to 633 (GPNMGGKS).

Belongs to the DNA mismatch repair MutS family.

Functionally, this protein is involved in the repair of mismatches in DNA. It is possible that it carries out the mismatch recognition step. This protein has a weak ATPase activity. This Bordetella bronchiseptica (strain ATCC BAA-588 / NCTC 13252 / RB50) (Alcaligenes bronchisepticus) protein is DNA mismatch repair protein MutS.